The primary structure comprises 473 residues: 6-phosphogluconate dehydrogenase, decarboxylating (473 aa).

NADP(+) contacts are provided by residues 10–15 (GMAVMG), 33–35 (NRT), 74–76 (VKS), and N102. Substrate is bound by residues N102 and 128 to 130 (SGG). K182 serves as the catalytic Proton acceptor. 185–186 (HN) contributes to the substrate binding site. The active-site Proton donor is E189. Residues Y190, K260, R287, R446, and H452 each contribute to the substrate site.

The protein belongs to the 6-phosphogluconate dehydrogenase family. In terms of assembly, homodimer.

The enzyme catalyses 6-phospho-D-gluconate + NADP(+) = D-ribulose 5-phosphate + CO2 + NADPH. The protein operates within carbohydrate degradation; pentose phosphate pathway; D-ribulose 5-phosphate from D-glucose 6-phosphate (oxidative stage): step 3/3. Catalyzes the oxidative decarboxylation of 6-phosphogluconate to ribulose 5-phosphate and CO(2), with concomitant reduction of NADP to NADPH. This chain is 6-phosphogluconate dehydrogenase, decarboxylating (gnd), found in Buchnera aphidicola subsp. Schizaphis graminum (strain Sg).